The primary structure comprises 264 residues: Apolipoprotein A-I (264 aa).

Residues 1–18 form the signal peptide; it reads MKAVVLAVAVLFLTGSQA. Tandem repeats lie at residues 67–88 and 89–110. The interval 67-264 is 10 X approximate tandem repeats; the sequence is LKLVDNWDTV…DETSKRLSTQ (198 aa). Position 109 is a methionine sulfoxide (methionine 109). The 3; half-length repeat unit spans residues 111–121; the sequence is KDLEEVKKQVQ. Tandem repeats lie at residues 122 to 143, 144 to 165, and 166 to 187. The 7; truncated repeat unit spans residues 188-207; that stretch reads PYSDKMRERLAQHLAKLKDS. Methionine 193 is modified (methionine sulfoxide). Repeat unit 8 spans residues 208 to 229; the sequence is TTLAEYRTKASNHLQTLSEKAK. The stretch at 230–240 is one 9; half-length repeat; sequence PALEDLRQGLT. Repeat 10 spans residues 241–264; it reads PMLESFRATIMGWIDETSKRLSTQ. Methionine 242 bears the Methionine sulfoxide mark.

The protein belongs to the apolipoprotein A1/A4/E family. Homodimer. Interacts with APOA1BP and CLU. Component of a sperm activating protein complex (SPAP), consisting of APOA1, an immunoglobulin heavy chain, an immunoglobulin light chain and albumin. Interacts with NDRG1. Interacts with SCGB3A2. Interacts with NAXE and YJEFN3. Glycosylated. In terms of processing, palmitoylated. Post-translationally, phosphorylation sites are present in the extracellular medium.

The protein localises to the secreted. In terms of biological role, participates in the reverse transport of cholesterol from tissues to the liver for excretion by promoting cholesterol efflux from tissues and by acting as a cofactor for the lecithin cholesterol acyltransferase (LCAT). As part of the SPAP complex, activates spermatozoa motility. This Peromyscus maniculatus bairdii (Prairie deer mouse) protein is Apolipoprotein A-I (Apoa1).